The sequence spans 238 residues: Ribonuclease PH (238 aa).

Phosphate contacts are provided by residues arginine 86 and 124 to 126; that span reads GTR.

It belongs to the RNase PH family. In terms of assembly, homohexameric ring arranged as a trimer of dimers.

It catalyses the reaction tRNA(n+1) + phosphate = tRNA(n) + a ribonucleoside 5'-diphosphate. Phosphorolytic 3'-5' exoribonuclease that plays an important role in tRNA 3'-end maturation. Removes nucleotide residues following the 3'-CCA terminus of tRNAs; can also add nucleotides to the ends of RNA molecules by using nucleoside diphosphates as substrates, but this may not be physiologically important. Probably plays a role in initiation of 16S rRNA degradation (leading to ribosome degradation) during starvation. This Brucella abortus (strain S19) protein is Ribonuclease PH.